The primary structure comprises 830 residues: C-Jun-amino-terminal kinase-interacting protein 2 (830 aa).

Disordered stretches follow at residues 1-26 (MADR…PPQD), 44-354 (CGLG…ADSP), 367-438 (EGSS…PGPC), 452-504 (LWAT…GSTA), and 539-574 (GNDS…PDSP). The segment covering 77-105 (DFQEFEMIDDNEEEDDEEEEEEEEEEEDG) has biased composition (acidic residues). The interval 111-278 (AGGGPGSQAL…RMISSISETE (168 aa)) is JNK-binding domain (JBD). Polar residues predominate over residues 142 to 172 (LHLTTLGAQDSLNNNNGGFTSAPPSSWQETV). 2 stretches are compositionally biased toward low complexity: residues 176–190 (PAQE…PLLP) and 218–227 (ASSGGASPSS). Positions 233-249 (ADLRSHSSGGHEGRRSS) are enriched in basic and acidic residues. Positions 242-504 (GHEGRRSSQE…PGSRTTGSTA (263 aa)) are necessary for interaction with FGF13. Phosphoserine occurs at positions 257, 304, and 307. Residues 271-307 (ISSISETELELSSDGGSSSGRSSHLTNSIEEASSPAS) show a composition bias toward low complexity. Residues 333–352 (TNSEYESGSESEPDLSEDAD) are compositionally biased toward acidic residues. A compositionally biased stretch (low complexity) spans 427 to 437 (APRLGPAQPGP). Acidic residues-rich tracts occupy residues 471–490 (SEEE…DAED) and 541–555 (DSEE…EEEA). In terms of domain architecture, SH3 spans 610 to 671 (EREQTHRAVF…PAFYAHAVPG (62 aa)). The PID domain maps to 683 to 819 (PCWVDRFDVQ…FLEYYQEHLA (137 aa)).

The protein belongs to the JIP scaffold family. In terms of assembly, forms homo- or heterooligomeric complexes. Binds specific components of the JNK signaling pathway namely JNK1, JNK2, JNK3, MAP2K7, MAP3K10, MAP3K11, MAP3K12 and MAPK13. Also binds the proline-rich domain-containing splice variant of apolipoprotein E receptor 2 (ApoER2). Binds the TPR motif-containing C-terminal of kinesin light chain. Binds the cytoplasmic tails of LRP1 and LRP2 (Megalin). Interacts with DCLK2. Interacts with FGF13; enables the interaction with MAPK13 and may regulate the MAPK8IP2 scaffolding activity. Interacts with TIAM1 and TIAM2. Interacts with SH3RF2. Highly expressed in brain. Expressed in all neurons. Also expressed in testis, primarily in the epididymal epidermis.

It localises to the cytoplasm. The JNK-interacting protein (JIP) group of scaffold proteins selectively mediates JNK signaling by aggregating specific components of the MAPK cascade to form a functional JNK signaling module. JIP2 inhibits IL1 beta-induced apoptosis in insulin-secreting cells. This chain is C-Jun-amino-terminal kinase-interacting protein 2 (Mapk8ip2), found in Mus musculus (Mouse).